An 82-amino-acid polypeptide reads, in one-letter code: Small ribosomal subunit protein bS16 (82 aa).

The protein belongs to the bacterial ribosomal protein bS16 family.

This chain is Small ribosomal subunit protein bS16, found in Actinobacillus pleuropneumoniae serotype 5b (strain L20).